The sequence spans 133 residues: Putative redox protein FMP46, mitochondrial (133 aa).

Residues 1–21 (MSFWKTLQRQPRTISLFTNDI) constitute a mitochondrion transit peptide. The active site involves C97.

Belongs to the FMP46 family.

It is found in the mitochondrion. In terms of biological role, putative mitochondrial redox protein which could be involved in the reduction of small toxic molecules. In Saccharomyces cerevisiae (strain ATCC 204508 / S288c) (Baker's yeast), this protein is Putative redox protein FMP46, mitochondrial (FMP46).